Consider the following 239-residue polypeptide: Protein Thf1 (239 aa).

A coiled-coil region spans residues 183–219 (ERVKKDLELYRSNLDRLKQARAIVEEMVKAARRQQER). A compositionally biased stretch (basic and acidic residues) spans 211–221 (KAARRQQERRQ). The segment at 211–239 (KAARRQQERRQSTASLPETPAADRRESSG) is disordered.

This sequence belongs to the THF1 family.

Functionally, may be involved in photosynthetic membrane biogenesis. The protein is Protein Thf1 of Synechococcus sp. (strain JA-3-3Ab) (Cyanobacteria bacterium Yellowstone A-Prime).